Reading from the N-terminus, the 170-residue chain is Centrin-2 (170 aa).

Residues 1 to 21 (MQRGALRGASPTARRRLVDRP) are disordered. EF-hand domains lie at 26-61 (DEIEEIREAFNLFDTDGSGMIDPKELKAAMQSLGFE), 62-97 (TKNPTIYQMIADLDRDSGGPIDFEEFLDAITAKLGD), 99-134 (ESREGIQKIFSLFDDDRTGTITLKNLKRVAKELGET), and 135-170 (MSEDELREMLERADSNGDGEISFEDFYAIMTKKTFP). Ca(2+)-binding residues include Asp39, Asp41, Ser43, Met45, and Glu50.

Belongs to the centrin family. As to quaternary structure, monomer. Does not homooligomerize.

The protein resides in the cytoplasm. It is found in the cytoskeleton. Its subcellular location is the microtubule organizing center. It localises to the centrosome. Its function is as follows. In tachyzoites, plays an essential role in microneme secretion that ensures parasite motility and attachment to, invasion of and egress from host cells. Also involved in the architecture of the peripheral annuli where it appears to regulate the localization of PAP2. In association with the myosin motor MyoJ, involved in the constriction of the basal complex at the end of daughter cell division in an actin-dependent manner; the basal complex is a cytoskeletal structure formed at the tachyzoite basal pole during daughter cell formation. May be involved in parasite replication. The chain is Centrin-2 from Toxoplasma gondii (strain ATCC 50611 / Me49).